We begin with the raw amino-acid sequence, 127 residues long: Apolipoprotein C-IV (127 aa).

Positions 1–27 are cleaved as a signal peptide; it reads MSLLRNRLQDLPALCLCVLVLACIGAC.

This sequence belongs to the apolipoprotein C4 family.

The protein localises to the secreted. Its function is as follows. May participate in lipoprotein metabolism. This Papio hamadryas (Hamadryas baboon) protein is Apolipoprotein C-IV (APOC4).